We begin with the raw amino-acid sequence, 373 residues long: Mannitol-1-phosphate 5-dehydrogenase (373 aa).

3-14 is a binding site for NAD(+); that stretch reads ALHFGAGNIGRG.

Belongs to the mannitol dehydrogenase family.

It catalyses the reaction D-mannitol 1-phosphate + NAD(+) = beta-D-fructose 6-phosphate + NADH + H(+). In Bacillus pumilus (strain SAFR-032), this protein is Mannitol-1-phosphate 5-dehydrogenase.